Consider the following 730-residue polypeptide: UvrABC system protein C (730 aa).

In terms of domain architecture, GIY-YIG spans 16-95 (AAPGVYKFRD…IKEFDPRFNV (80 aa)). In terms of domain architecture, UVR spans 208 to 243 (DKLVKDLEKRMQQASEDLDFETAARLRDDIGALRKA). The disordered stretch occupies residues 678 to 730 (ARALPAAVGDDELDKESESSVTSADAPSAESGSGDEGSESRELSMPTTGPSAQ).

The protein belongs to the UvrC family. As to quaternary structure, interacts with UvrB in an incision complex.

It localises to the cytoplasm. In terms of biological role, the UvrABC repair system catalyzes the recognition and processing of DNA lesions. UvrC both incises the 5' and 3' sides of the lesion. The N-terminal half is responsible for the 3' incision and the C-terminal half is responsible for the 5' incision. This Rhodococcus erythropolis (strain PR4 / NBRC 100887) protein is UvrABC system protein C.